We begin with the raw amino-acid sequence, 211 residues long: Peptidyl-prolyl cis-trans isomerase-like 3 (211 aa).

In terms of domain architecture, PPIase cyclophilin-type spans 1–204; the sequence is MSVTLHTTHG…ETLRINRVTI (204 aa).

It belongs to the cyclophilin-type PPIase family. PPIL3 subfamily.

The enzyme catalyses [protein]-peptidylproline (omega=180) = [protein]-peptidylproline (omega=0). Its function is as follows. PPIases accelerate the folding of proteins. It catalyzes the cis-trans isomerization of proline imidic peptide bonds in oligopeptides. The polypeptide is Peptidyl-prolyl cis-trans isomerase-like 3 (cyp10) (Emericella nidulans (strain FGSC A4 / ATCC 38163 / CBS 112.46 / NRRL 194 / M139) (Aspergillus nidulans)).